We begin with the raw amino-acid sequence, 368 residues long: CST complex subunit STN1 (368 aa).

The interaction with CTC1 stretch occupies residues 1-185 (MQPGSSRCEE…KVYDQPFHSS (185 aa)). A DNA-binding region (OB) is located at residues 57 to 155 (VDVLGTVIGV…EIHATTYYKV (99 aa)). Winged helix-turn-helix (wHTH) stretches follow at residues 191–295 (EALS…YVTR) and 296–368 (EDKD…YTAF).

This sequence belongs to the STN1 family. Component of the CST complex, composed of TEN1/C17orf106, CTC1/C17orf68 and STN1; in the complex interacts directly with TEN1 and CTC1. Interacts with ACD/TPP1, POT1 and POLA1.

It localises to the nucleus. The protein resides in the chromosome. The protein localises to the telomere. In terms of biological role, component of the CST complex proposed to act as a specialized replication factor promoting DNA replication under conditions of replication stress or natural replication barriers such as the telomere duplex. The CST complex binds single-stranded DNA with high affinity in a sequence-independent manner, while isolated subunits bind DNA with low affinity by themselves. Initially the CST complex has been proposed to protect telomeres from DNA degradation. However, the CST complex has been shown to be involved in several aspects of telomere replication. The CST complex inhibits telomerase and is involved in telomere length homeostasis; it is proposed to bind to newly telomerase-synthesized 3' overhangs and to terminate telomerase action implicating the association with the ACD:POT1 complex thus interfering with its telomerase stimulation activity. The CST complex is also proposed to be involved in fill-in synthesis of the telomeric C-strand probably implicating recruitment and activation of DNA polymerase alpha. The CST complex facilitates recovery from many forms of exogenous DNA damage; seems to be involved in the re-initiation of DNA replication at repaired forks and/or dormant origins. Required for efficicient replication of the duplex region of the telomere. Promotes efficient replication of lagging-strand telomeres. Promotes general replication start following replication-fork stalling implicating new origin firing. May be in involved in C-strand fill-in during late S/G2 phase independent of its role in telomere duplex replication. Component of the CST complex, a complex that binds to single-stranded DNA and is required to protect telomeres from DNA degradation. The CST complex binds single-stranded DNA with high affinity in a sequence-independent manner, while isolated subunits bind DNA with low affinity by themselves. In addition to telomere protection, the CST complex has probably a more general role in DNA metabolism at non-telomeric sites. The protein is CST complex subunit STN1 of Homo sapiens (Human).